The primary structure comprises 232 residues: MKKLLVIDFKEKIKYEDAWNFQRKLHDLRVNNIIYDTLILLEHFPVITLGKFGNESNLLKRKEELEDIGIDFLRVDRGGDITYHGPLQLVGYLIFRVEGVKNFVLKIERSIINVLNEYGIEAKENLKYPGVWVGDRKIAAIGIAIKKKVSYHGFALNVSNDLTPFSYIIPCGLKDKKVTSILKEADFSPSMEDVKKKVCLSVVREFGFDSFKVFNFSSYKELSNFDMLLEDQ.

In terms of domain architecture, BPL/LPL catalytic spans 32 to 219; it reads NIIYDTLILL…SFKVFNFSSY (188 aa). Substrate contacts are provided by residues 77–84, 140–142, and 153–155; these read RGGDITYH, AIG, and GFA. Cysteine 171 (acyl-thioester intermediate) is an active-site residue.

It belongs to the LipB family.

The protein resides in the cytoplasm. It catalyses the reaction octanoyl-[ACP] + L-lysyl-[protein] = N(6)-octanoyl-L-lysyl-[protein] + holo-[ACP] + H(+). It participates in protein modification; protein lipoylation via endogenous pathway; protein N(6)-(lipoyl)lysine from octanoyl-[acyl-carrier-protein]: step 1/2. Catalyzes the transfer of endogenously produced octanoic acid from octanoyl-acyl-carrier-protein onto the lipoyl domains of lipoate-dependent enzymes. Lipoyl-ACP can also act as a substrate although octanoyl-ACP is likely to be the physiological substrate. The protein is Octanoyltransferase of Dictyoglomus turgidum (strain DSM 6724 / Z-1310).